The sequence spans 144 residues: D-aminoacyl-tRNA deacylase (144 aa).

The Gly-cisPro motif, important for rejection of L-amino acids motif lies at 136–137; that stretch reads GP.

This sequence belongs to the DTD family. Homodimer.

The protein localises to the cytoplasm. It carries out the reaction glycyl-tRNA(Ala) + H2O = tRNA(Ala) + glycine + H(+). It catalyses the reaction a D-aminoacyl-tRNA + H2O = a tRNA + a D-alpha-amino acid + H(+). In terms of biological role, an aminoacyl-tRNA editing enzyme that deacylates mischarged D-aminoacyl-tRNAs. Also deacylates mischarged glycyl-tRNA(Ala), protecting cells against glycine mischarging by AlaRS. Acts via tRNA-based rather than protein-based catalysis; rejects L-amino acids rather than detecting D-amino acids in the active site. By recycling D-aminoacyl-tRNA to D-amino acids and free tRNA molecules, this enzyme counteracts the toxicity associated with the formation of D-aminoacyl-tRNA entities in vivo and helps enforce protein L-homochirality. This chain is D-aminoacyl-tRNA deacylase, found in Aliivibrio salmonicida (strain LFI1238) (Vibrio salmonicida (strain LFI1238)).